The primary structure comprises 350 residues: Histidinol-phosphate aminotransferase 1 (350 aa).

N6-(pyridoxal phosphate)lysine is present on Lys210.

Belongs to the class-II pyridoxal-phosphate-dependent aminotransferase family. Histidinol-phosphate aminotransferase subfamily. As to quaternary structure, homodimer. Pyridoxal 5'-phosphate serves as cofactor.

It catalyses the reaction L-histidinol phosphate + 2-oxoglutarate = 3-(imidazol-4-yl)-2-oxopropyl phosphate + L-glutamate. Its pathway is amino-acid biosynthesis; L-histidine biosynthesis; L-histidine from 5-phospho-alpha-D-ribose 1-diphosphate: step 7/9. This chain is Histidinol-phosphate aminotransferase 1, found in Pseudomonas fluorescens (strain ATCC BAA-477 / NRRL B-23932 / Pf-5).